The chain runs to 257 residues: Non-homologous end joining protein Ku (257 aa).

A Ku domain is found at 9 to 184 (TFGMVAIPIG…YTKPEVNEQE (176 aa)).

The protein belongs to the prokaryotic Ku family. In terms of assembly, homodimer. Interacts with LigD.

Its function is as follows. With LigD forms a non-homologous end joining (NHEJ) DNA repair enzyme, which repairs dsDNA breaks with reduced fidelity. Binds linear dsDNA with 5'- and 3'- overhangs but not closed circular dsDNA nor ssDNA. Recruits and stimulates the ligase activity of LigD. The protein is Non-homologous end joining protein Ku of Lachnoclostridium phytofermentans (strain ATCC 700394 / DSM 18823 / ISDg) (Clostridium phytofermentans).